Here is a 415-residue protein sequence, read N- to C-terminus: ATP-dependent Clp protease ATP-binding subunit ClpX (415 aa).

Positions 1–53 constitute a ClpX-type ZB domain; that stretch reads MLRSKGDLVLGCSFCGKKEDERRRIVTGHGVSICNYCVERCAEYLRDRKPSAL. Residues cysteine 12, cysteine 15, cysteine 34, and cysteine 37 each contribute to the Zn(2+) site. 118-125 contacts ATP; it reads PTGSGKTL.

The protein belongs to the ClpX chaperone family. Component of the ClpX-ClpP complex. Forms a hexameric ring that, in the presence of ATP, binds to fourteen ClpP subunits assembled into a disk-like structure with a central cavity, resembling the structure of eukaryotic proteasomes.

Functionally, ATP-dependent specificity component of the Clp protease. It directs the protease to specific substrates. Can perform chaperone functions in the absence of ClpP. This Treponema pallidum (strain Nichols) protein is ATP-dependent Clp protease ATP-binding subunit ClpX.